A 742-amino-acid polypeptide reads, in one-letter code: MKDDFAEEEEVQSFGYKRFGIQEGTQCTKCKNNWALKFSIVLLYILCALLTITVAILGYKVVEKMDNVTDGMETSHQTYDNKLTAVESDLKKLGDQAGKKALSTNSELSTFRSDILDLRQQLQEITEKTSKNKDTLEKLQANGDSLVDRQSQLKETLQNNSFLITTVNKTLQAYNGYVTNLQQDTSVLQGNLQSQMYSQSVVIMNLNNLNLTQVQQRNLISNLQQSVDDTSLAIQRIKNDFQNLQQVFLQAKKDTDWLKEKVQSLQTLAANNSALAKANNDTLEDMNSQLSSFTGQMDNITTISQANEQSLKDLQDLHKDTENRTAVKFSQLEERFQVFETDIVNIISNISYTAHHLRTLTSNLNDVRTTCTDTLTRHTDDLTSLNNTLVNIRLDSISLRMQQDMMRSKLDTEVANLSVVMEEMKLVDSKHGQLIKNFTILQGPPGPRGPKGDRGSQGPPGPTGNKGQKGEKGEPGPPGPAGERGTIGPVGPPGERGSKGSKGSQGPKGSRGSPGKPGPQGPSGDPGPPGPPGKDGLPGPQGPPGFQGLQGTVGEPGVPGPRGLPGLPGVPGMPGPKGPPGPPGPSGAMEPLALQNEPTPASEVNGCPPHWKNFTDKCYYFSLEKEIFEDAKLFCEDKSSHLVFINSREEQQWIKKHTVGRESHWIGLTDSEQESEWKWLDGSPVDYKNWKAGQPDNWGSGHGPGEDCAGLIYAGQWNDFQCDEINNFICEKEREAVPSSIL.

Topologically, residues 1–37 are cytoplasmic; the sequence is MKDDFAEEEEVQSFGYKRFGIQEGTQCTKCKNNWALK. Residues 38 to 58 form a helical; Signal-anchor for type II membrane protein membrane-spanning segment; sequence FSIVLLYILCALLTITVAILG. The Extracellular segment spans residues 59-742; sequence YKVVEKMDNV…EREAVPSSIL (684 aa). A glycan (N-linked (GlcNAc...) asparagine) is linked at Asn67. Residues 73 to 142 adopt a coiled-coil conformation; it reads ETSHQTYDNK…KDTLEKLQAN (70 aa). N-linked (GlcNAc...) asparagine glycosylation is found at Asn159 and Asn168. Positions 205 to 254 form a coiled coil; sequence NLNNLNLTQVQQRNLISNLQQSVDDTSLAIQRIKNDFQNLQQVFLQAKKD. An N-linked (GlcNAc...) asparagine glycan is attached at Asn271. A disordered region spans residues 439-608; it reads TILQGPPGPR…TPASEVNGCP (170 aa). Collagen-like domains are found at residues 452–511 and 527–586; these read GDRG…KGSR and GPPG…PGPS. The span at 501–514 shows a compositional bias: low complexity; that stretch reads SKGSQGPKGSRGSP. The segment covering 516 to 532 has biased composition (pro residues); that stretch reads KPGPQGPSGDPGPPGPP. The span at 534 to 556 shows a compositional bias: low complexity; it reads KDGLPGPQGPPGFQGLQGTVGEP. The segment covering 571 to 585 has biased composition (pro residues); it reads PGMPGPKGPPGPPGP. Intrachain disulfides connect Cys607–Cys618, Cys635–Cys730, and Cys708–Cys722. The 118-residue stretch at 614 to 731 folds into the C-type lectin domain; that stretch reads FTDKCYYFSL…CDEINNFICE (118 aa). Ca(2+) contacts are provided by Phe644, Asn646, Glu650, Asp670, and Glu674. Positions 691, 694, and 696 each coordinate a carbohydrate. Residues Gln694, Asp696, Asn697, Glu706, Asp707, Asn718, Asp719, and Glu731 each contribute to the Ca(2+) site. A carbohydrate is bound at residue Glu706. Residues Asn718 and Asp719 each contribute to the a carbohydrate site.

The extracellular domain forms a stable trimer. The extracellular domain interacts with fibrillar amyloid-beta peptide. As to expression, expressed in vascular endothelial cells in the heart, in perivascular macrophage and smooth muscle cells. Expressed in plaques-surrounding reactive astrocytes located in cerebral cortex and hippocampus and in leptomeningeal vessels showing characteristics of cerebral amyloid angiopathy (CAA) in a double transgenic mouse model of Alzheimer disease (at protein level). Strongly expressed in lung. Moderately expressed in heart, skeletal muscle, spleen, liver, brain, colon, testis, stomach and kidney. Expressed in neonatal astrocytes. Expressed in reactive astrocytes and vascular/perivascular cells in the brain of a double transgenic mouse model of Alzheimer disease.

Its subcellular location is the membrane. Its function is as follows. Scavenger receptor that displays several functions associated with host defense. Promotes binding and phagocytosis of Gram-positive, Gram-negative bacteria and yeast. Also binds to sialyl Lewis X or a trisaccharide and asialo-orosomucoid (ASOR). Mediates the recognition, internalization and degradation of oxidatively modified low density lipoprotein (oxLDL) by vascular endothelial cells. Binds to several carbohydrates including Gal-type ligands, D-galactose, L- and D-fucose, GalNAc, T and Tn antigens in a calcium-dependent manner and internalizes specifically GalNAc in nurse-like cells. In Mus musculus (Mouse), this protein is Collectin-12 (Colec12).